The primary structure comprises 141 residues: Large-conductance mechanosensitive channel (141 aa).

The next 3 membrane-spanning stretches (helical) occupy residues 17-37 (MDLA…ASIV), 40-60 (LIMP…LFIA), and 86-106 (GNFV…FIIV).

The protein belongs to the MscL family. In terms of assembly, homopentamer.

It is found in the cell inner membrane. In terms of biological role, channel that opens in response to stretch forces in the membrane lipid bilayer. May participate in the regulation of osmotic pressure changes within the cell. The polypeptide is Large-conductance mechanosensitive channel (Thiobacillus denitrificans (strain ATCC 25259 / T1)).